We begin with the raw amino-acid sequence, 602 residues long: Elongation factor 4 (602 aa).

The region spanning 7 to 188 (ENIRNFSIIA…SIIRLVPPPK (182 aa)) is the tr-type G domain. GTP is bound by residues 19 to 24 (DHGKST) and 135 to 138 (NKID).

This sequence belongs to the TRAFAC class translation factor GTPase superfamily. Classic translation factor GTPase family. LepA subfamily.

Its subcellular location is the cell inner membrane. The catalysed reaction is GTP + H2O = GDP + phosphate + H(+). Required for accurate and efficient protein synthesis under certain stress conditions. May act as a fidelity factor of the translation reaction, by catalyzing a one-codon backward translocation of tRNAs on improperly translocated ribosomes. Back-translocation proceeds from a post-translocation (POST) complex to a pre-translocation (PRE) complex, thus giving elongation factor G a second chance to translocate the tRNAs correctly. Binds to ribosomes in a GTP-dependent manner. The polypeptide is Elongation factor 4 (Chlamydia muridarum (strain MoPn / Nigg)).